A 111-amino-acid chain; its full sequence is MALWGRSAYRQKTVTSRLTKHRHTSPLNLLNFFIFFSLHLCALFLATAVHYACFACFVLFRHAILLLFYLLARGRASQIQARQKVRCTGATFYRFLIISLSQRAWATKKPI.

2 helical membrane passes run 29-49 (LLNFFIFFSLHLCALFLATAV) and 52-72 (ACFACFVLFRHAILLLFYLLA).

It is found in the membrane. This is an uncharacterized protein from Saccharomyces cerevisiae (strain ATCC 204508 / S288c) (Baker's yeast).